Consider the following 293-residue polypeptide: Ribonuclease Z (293 aa).

Zn(2+)-binding residues include H60, H62, D64, H65, H132, D200, and H256. D64 serves as the catalytic Proton acceptor.

It belongs to the RNase Z family. As to quaternary structure, homodimer. Zn(2+) is required as a cofactor.

The catalysed reaction is Endonucleolytic cleavage of RNA, removing extra 3' nucleotides from tRNA precursor, generating 3' termini of tRNAs. A 3'-hydroxy group is left at the tRNA terminus and a 5'-phosphoryl group is left at the trailer molecule.. Its function is as follows. Zinc phosphodiesterase, which displays some tRNA 3'-processing endonuclease activity. Probably involved in tRNA maturation, by removing a 3'-trailer from precursor tRNA. This chain is Ribonuclease Z, found in Sulfurisphaera tokodaii (strain DSM 16993 / JCM 10545 / NBRC 100140 / 7) (Sulfolobus tokodaii).